We begin with the raw amino-acid sequence, 211 residues long: Claudin-1 (211 aa).

The Cytoplasmic portion of the chain corresponds to 1–7 (MANAGLQ). The helical transmembrane segment at 8 to 28 (LLGFILASLGWIGSIVSTALP) threads the bilayer. The Extracellular portion of the chain corresponds to 29 to 81 (QWKIYSYAGDNIVTAQAIYEGLWMSCVSQSTGQIQCKVFDSLLNLNSTLQATR). Residues C54 and C64 are joined by a disulfide bond. The chain crosses the membrane as a helical span at residues 82 to 102 (ALMVIGILLGLIAIFVSTIGM). At 103 to 115 (KCMRCLEDDEVQK) the chain is on the cytoplasmic side. A helical membrane pass occupies residues 116–136 (MWMAVIGGIIFVISGLATLVA). Residues 137–163 (TAWYGNRIVQEFYDPMTPVNARYEFGQ) lie on the Extracellular side of the membrane. A helical membrane pass occupies residues 164–184 (ALFTGWAAASLCLLGGALLSC). Residues 185-211 (SCPRKTTSYPTPRPYPKPTPSSGKDYV) lie on the Cytoplasmic side of the membrane. Residues 190–211 (TTSYPTPRPYPKPTPSSGKDYV) are disordered. The interval 210–211 (YV) is interactions with TJP1, TJP2, TJP3 and PATJ.

The protein belongs to the claudin family. As to quaternary structure, can form homo- and heteropolymers with other CLDN. Homopolymers interact with CLDN3, but not CLDN2, homopolymers. Directly interacts with TJP1/ZO-1, TJP2/ZO-2 and TJP3/ZO-3. Interacts with MPDZ and PATJ. Interacts with OCLN, CD81, CLDN4, CLDN6 and CLDN9. As to expression, detected in epididymis (at protein level). Detected in testis and epididymis.

The protein resides in the cell junction. It is found in the tight junction. Its subcellular location is the cell membrane. The protein localises to the basolateral cell membrane. Claudins function as major constituents of the tight junction complexes that regulate the permeability of epithelia. While some claudin family members play essential roles in the formation of impermeable barriers, others mediate the permeability to ions and small molecules. Often, several claudin family members are coexpressed and interact with each other, and this determines the overall permeability. CLDN1 is required to prevent the paracellular diffusion of small molecules through tight junctions in the epidermis and is required for the normal barrier function of the skin. Required for normal water homeostasis and to prevent excessive water loss through the skin, probably via an indirect effect on the expression levels of other proteins, since CLDN1 itself seems to be dispensable for water barrier formation in keratinocyte tight junctions. The sequence is that of Claudin-1 (Cldn1) from Rattus norvegicus (Rat).